A 1032-amino-acid polypeptide reads, in one-letter code: uncharacterized protein (1032 aa).

3 disordered regions span residues 54-80, 391-451, and 884-934; these read NNNN…NNNN, QLQI…QTHL, and INNE…SKVK. The segment covering 884–907 has biased composition (low complexity); that stretch reads INNENNNENNNNYNGNINSNNNNN.

This is an uncharacterized protein from Dictyostelium discoideum (Social amoeba).